The primary structure comprises 248 residues: tRNA (guanine-N(1)-)-methyltransferase (248 aa).

S-adenosyl-L-methionine is bound by residues glycine 114 and 134–139; that span reads IGDYVL.

This sequence belongs to the RNA methyltransferase TrmD family. As to quaternary structure, homodimer.

The protein resides in the cytoplasm. The enzyme catalyses guanosine(37) in tRNA + S-adenosyl-L-methionine = N(1)-methylguanosine(37) in tRNA + S-adenosyl-L-homocysteine + H(+). In terms of biological role, specifically methylates guanosine-37 in various tRNAs. The sequence is that of tRNA (guanine-N(1)-)-methyltransferase from Blochmanniella floridana.